We begin with the raw amino-acid sequence, 619 residues long: Chitinase C (619 aa).

Residues 1 to 30 (MRFRHKAAALAATLALPLAGLVGLASPAQA) form the signal peptide. One can recognise a CBM2 domain in the interval 31–134 (ATSATATFAK…KLNGGSCDGT (104 aa)). The 86-residue stretch at 144-229 (APGTPTASNI…GAVKVTTTGG (86 aa)) folds into the Fibronectin type-III domain. The segment at 212–236 (ADQTGPASGAVKVTTTGGGDGGNPG) is disordered. The span at 227–236 (TGGGDGGNPG) shows a compositional bias: gly residues. Residues 240 to 619 (EVKMGYFTNW…TPAVRTTRRH (380 aa)) form the GH18 domain. Residues 312 to 313 (DQ) and 339 to 342 (GGWT) contribute to the chitin site. Glu-382 serves as the catalytic Proton donor. Chitin-binding positions include Tyr-383, 449-452 (MTYD), and Trp-589.

It belongs to the glycosyl hydrolase 18 family. Chitinase class II subfamily.

It carries out the reaction Random endo-hydrolysis of N-acetyl-beta-D-glucosaminide (1-&gt;4)-beta-linkages in chitin and chitodextrins.. This is Chitinase C (chiC) from Streptomyces lividans.